The chain runs to 107 residues: Anti-adapter protein IraM (107 aa).

The protein belongs to the IraM/RssC family.

Its subcellular location is the cytoplasm. Its function is as follows. Inhibits RpoS proteolysis by regulating RssB activity, thereby increasing the stability of the sigma stress factor RpoS during magnesium starvation. This is Anti-adapter protein IraM from Escherichia coli O17:K52:H18 (strain UMN026 / ExPEC).